Consider the following 64-residue polypeptide: Large ribosomal subunit protein uL29 (64 aa).

This sequence belongs to the universal ribosomal protein uL29 family.

In Porphyromonas gingivalis (strain ATCC 33277 / DSM 20709 / CIP 103683 / JCM 12257 / NCTC 11834 / 2561), this protein is Large ribosomal subunit protein uL29.